Reading from the N-terminus, the 265-residue chain is Undecaprenyl-diphosphatase (265 aa).

A run of 7 helical transmembrane segments spans residues 38-58, 80-100, 107-127, 135-155, 175-195, 213-233, and 244-264; these read SDMFNIVIQAGAILAVTIIYW, LIVAFLITAILGLVVKKLGFE, PIAWALIIGGIWMIFAEWAAA, ITWLVAILVGIAQIVAGVFPG, AAATEFAFLVGIPTMYAASGY, ALAIAFVVSTIVAFIAVKWLL, and FAIYRIILGVLLLGMTATGMI.

The protein belongs to the UppP family.

The protein localises to the cell inner membrane. It carries out the reaction di-trans,octa-cis-undecaprenyl diphosphate + H2O = di-trans,octa-cis-undecaprenyl phosphate + phosphate + H(+). Functionally, catalyzes the dephosphorylation of undecaprenyl diphosphate (UPP). Confers resistance to bacitracin. The protein is Undecaprenyl-diphosphatase of Rhizobium etli (strain ATCC 51251 / DSM 11541 / JCM 21823 / NBRC 15573 / CFN 42).